The following is a 367-amino-acid chain: Pentatricopeptide repeat-containing protein At1g11900 (367 aa).

8 PPR repeats span residues 69–103 (SKIDYTNLVEKFTRDGNLSGAYDLLQSLQEKNICL), 104–139 (PISVFKNLLAAAGELNDMKLSCRVFREVLILPGKEP), 141–175 (SSDCYLNLARAFINTDDCTYLTSLLKEISESSLPY), 176–210 (RLIVMNRIIFAFAETRQIDKVLMILKEMKEWECKP), 211–241 (DVITYNSVLDILGRAGLVNEILGVLSTMKED), 247–281 (NIITYNTVLNGMRKACRFDMCLVIYNEMVQCGIEP), 282–316 (DLLSYTAVIDSLGRSGNVKESLRLFDEMKQRQIRP), and 317–347 (SVYVYRALIDCLKKSGDFQSALQLSDELKNT).

Belongs to the PPR family. P subfamily.

This Arabidopsis thaliana (Mouse-ear cress) protein is Pentatricopeptide repeat-containing protein At1g11900.